We begin with the raw amino-acid sequence, 71 residues long: UPF0346 protein SSU05_1322 (71 aa).

This sequence belongs to the UPF0346 family.

The chain is UPF0346 protein SSU05_1322 from Streptococcus suis (strain 05ZYH33).